The chain runs to 276 residues: Rhomboid protease GlpG (276 aa).

Helical transmembrane passes span 94 to 114 (GPVTWVMMIACVVVFIAMQIL), 142 to 162 (ALMHFSLMHILFNLLWWWYLG), 169 to 189 (LGSGKLIVITLISALLSGYVQ), 192 to 212 (FSGPWFGGLSGVVYALMGYVW), 229 to 249 (LIIFALIWIVAGWFDLFGMSM), and 250 to 270 (ANGAHIAGLAVGLAMAFVDSL). Ser201 (nucleophile) is an active-site residue. His254 is a catalytic residue.

Belongs to the peptidase S54 family.

Its subcellular location is the cell inner membrane. It catalyses the reaction Cleaves type-1 transmembrane domains using a catalytic dyad composed of serine and histidine that are contributed by different transmembrane domains.. Functionally, rhomboid-type serine protease that catalyzes intramembrane proteolysis. This Shigella flexneri serotype 5b (strain 8401) protein is Rhomboid protease GlpG.